The sequence spans 210 residues: Cdc42 effector protein 2 (210 aa).

Serine 2 bears the N-acetylserine mark. A CRIB domain is found at 30-44; it reads ISPPLGDFRHTIHIG. Phosphoserine is present on residues serine 31, serine 101, and serine 141. The interval 124-145 is disordered; that stretch reads AQAPPKPPRLHLETPQASPQEA.

It belongs to the BORG/CEP family. Interacts with CDC42 and RHOQ, in a GTP-dependent manner, and with SEPT7.

The protein resides in the endomembrane system. The protein localises to the cytoplasm. It is found in the cytoskeleton. Probably involved in the organization of the actin cytoskeleton. May act downstream of CDC42 to induce actin filament assembly leading to cell shape changes. Induces pseudopodia formation in fibroblasts in a CDC42-dependent manner. The chain is Cdc42 effector protein 2 (CDC42EP2) from Bos taurus (Bovine).